Here is a 186-residue protein sequence, read N- to C-terminus: ADP-ribosylation factor-like protein 8A (186 aa).

The note=Mediates targeting to membranes intramembrane region spans 1–19; the sequence is MIALFNKLLDWFKALFWKE. GTP-binding positions include 29 to 35, 71 to 75, and 130 to 133; these read QYSGKTT, DIGGQ, and NKRD.

The protein belongs to the small GTPase superfamily. Arf family. In terms of assembly, interacts with PLEKHM1. When GTP-bound, interacts with RUFY3 and RUFY4, but not with RUFY1, nor RUFY2. In terms of tissue distribution, ubiquitously expressed.

It is found in the late endosome membrane. The protein resides in the lysosome membrane. It localises to the cytoplasm. The protein localises to the cytoskeleton. Its subcellular location is the spindle. It is found in the cell projection. The protein resides in the axon. It localises to the synapse. Functionally, plays a role in lysosome motility. In neurons, mediates the anterograde axonal long-range transport of presynaptic lysosome-related vesicles required for presynaptic biogenesis and synaptic function. May play a role in chromosome segregation. In Homo sapiens (Human), this protein is ADP-ribosylation factor-like protein 8A (ARL8A).